The following is a 512-amino-acid chain: Ribose import ATP-binding protein RbsA 2 (512 aa).

ABC transporter domains follow at residues 22–258 (LEMR…VGRD) and 263–512 (FPKV…TGNA). 54-61 (GENGAGKS) contacts ATP.

Belongs to the ABC transporter superfamily. Ribose importer (TC 3.A.1.2.1) family. As to quaternary structure, the complex is composed of an ATP-binding protein (RbsA), two transmembrane proteins (RbsC) and a solute-binding protein (RbsB).

The protein resides in the cell inner membrane. It catalyses the reaction D-ribose(out) + ATP + H2O = D-ribose(in) + ADP + phosphate + H(+). In terms of biological role, part of the ABC transporter complex RbsABC involved in ribose import. Responsible for energy coupling to the transport system. This chain is Ribose import ATP-binding protein RbsA 2, found in Rhizobium johnstonii (strain DSM 114642 / LMG 32736 / 3841) (Rhizobium leguminosarum bv. viciae).